A 203-amino-acid chain; its full sequence is ATP-dependent Clp protease proteolytic subunit 2 (203 aa).

The Nucleophile role is filled by Ser-101. His-126 is a catalytic residue.

The protein belongs to the peptidase S14 family. Fourteen ClpP subunits assemble into 2 heptameric rings which stack back to back to give a disk-like structure with a central cavity, resembling the structure of eukaryotic proteasomes.

Its subcellular location is the cytoplasm. It catalyses the reaction Hydrolysis of proteins to small peptides in the presence of ATP and magnesium. alpha-casein is the usual test substrate. In the absence of ATP, only oligopeptides shorter than five residues are hydrolyzed (such as succinyl-Leu-Tyr-|-NHMec, and Leu-Tyr-Leu-|-Tyr-Trp, in which cleavage of the -Tyr-|-Leu- and -Tyr-|-Trp bonds also occurs).. Cleaves peptides in various proteins in a process that requires ATP hydrolysis. Has a chymotrypsin-like activity. Plays a major role in the degradation of misfolded proteins. In Prochlorococcus marinus (strain MIT 9312), this protein is ATP-dependent Clp protease proteolytic subunit 2.